A 459-amino-acid chain; its full sequence is MTNYAIILAAGKGTRMKSDLPKVLHQVAGLTMLEHVKRAVDTMNPAKTVTVVGHKAELVQKVLEDQSEFVLQSEQLGTGHAVMMAESSLAELEGQTLVIAGDTPLIRGESLKNLLHYHKSHKNVATILTAEADDPFGYGRIIRNQNAEVIKIVEQKDASDYEQQVKEINTGTYVFDNKRLFEALKEINTNNAQGEYYLTDVISIFKEADEKVGAYKLADFDESLGVNDRVALAKAEKVMRRRINHAHMVNGVTLTNPASTYIDSDVIIAPDVVIEANVTLKGQTKIETGAVLTNGTYIVDSVIGENTVITHSMIEASRIEKNVTVGPYAHLRPNSVLEEAVHVGNFVEVKASTLGKETKAGHLTYIGNAEVGHDVNFGAGTITVNYDGQNKYKTIIGNHVFVGSNSTIIAPLTIGDNALTAAGSTIHKDVPVDSIAIGRGRQVNKEGYAKKKPHHPNNK.

Residues 1-229 (MTNYAIILAA…FDESLGVNDR (229 aa)) form a pyrophosphorylase region. UDP-N-acetyl-alpha-D-glucosamine-binding positions include 8 to 11 (LAAG), K22, Q72, and 77 to 78 (GT). Mg(2+) is bound at residue D102. Residues G139, E154, N169, and N227 each coordinate UDP-N-acetyl-alpha-D-glucosamine. Residue N227 participates in Mg(2+) binding. A linker region spans residues 230 to 250 (VALAKAEKVMRRRINHAHMVN). The N-acetyltransferase stretch occupies residues 251–459 (GVTLTNPAST…KKKPHHPNNK (209 aa)). 2 residues coordinate UDP-N-acetyl-alpha-D-glucosamine: R332 and K350. H362 acts as the Proton acceptor in catalysis. Positions 365 and 376 each coordinate UDP-N-acetyl-alpha-D-glucosamine. Residues A379, 385–386 (NY), S404, A422, and R439 contribute to the acetyl-CoA site.

The protein in the N-terminal section; belongs to the N-acetylglucosamine-1-phosphate uridyltransferase family. In the C-terminal section; belongs to the transferase hexapeptide repeat family. As to quaternary structure, homotrimer. Mg(2+) is required as a cofactor.

It is found in the cytoplasm. It catalyses the reaction alpha-D-glucosamine 1-phosphate + acetyl-CoA = N-acetyl-alpha-D-glucosamine 1-phosphate + CoA + H(+). The catalysed reaction is N-acetyl-alpha-D-glucosamine 1-phosphate + UTP + H(+) = UDP-N-acetyl-alpha-D-glucosamine + diphosphate. It participates in nucleotide-sugar biosynthesis; UDP-N-acetyl-alpha-D-glucosamine biosynthesis; N-acetyl-alpha-D-glucosamine 1-phosphate from alpha-D-glucosamine 6-phosphate (route II): step 2/2. The protein operates within nucleotide-sugar biosynthesis; UDP-N-acetyl-alpha-D-glucosamine biosynthesis; UDP-N-acetyl-alpha-D-glucosamine from N-acetyl-alpha-D-glucosamine 1-phosphate: step 1/1. It functions in the pathway bacterial outer membrane biogenesis; LPS lipid A biosynthesis. Its function is as follows. Catalyzes the last two sequential reactions in the de novo biosynthetic pathway for UDP-N-acetylglucosamine (UDP-GlcNAc). The C-terminal domain catalyzes the transfer of acetyl group from acetyl coenzyme A to glucosamine-1-phosphate (GlcN-1-P) to produce N-acetylglucosamine-1-phosphate (GlcNAc-1-P), which is converted into UDP-GlcNAc by the transfer of uridine 5-monophosphate (from uridine 5-triphosphate), a reaction catalyzed by the N-terminal domain. The sequence is that of Bifunctional protein GlmU from Streptococcus mutans serotype c (strain ATCC 700610 / UA159).